Consider the following 123-residue polypeptide: Large ribosomal subunit protein bL12 (123 aa).

Belongs to the bacterial ribosomal protein bL12 family. In terms of assembly, homodimer. Part of the ribosomal stalk of the 50S ribosomal subunit. Forms a multimeric L10(L12)X complex, where L10 forms an elongated spine to which 2 to 4 L12 dimers bind in a sequential fashion. Binds GTP-bound translation factors.

Forms part of the ribosomal stalk which helps the ribosome interact with GTP-bound translation factors. Is thus essential for accurate translation. This Parvibaculum lavamentivorans (strain DS-1 / DSM 13023 / NCIMB 13966) protein is Large ribosomal subunit protein bL12.